Reading from the N-terminus, the 2493-residue chain is Adenylate cyclase (2493 aa).

Composition is skewed to polar residues over residues 1-18 (MLFT…SPEQ), 42-51 (RDSNGSSNFT), 60-78 (SQQY…QPDI), 129-147 (PANS…SISP), and 197-210 (APFS…TSVN). 9 disordered regions span residues 1–85 (MLFT…SSTL), 99–148 (FEHA…ISPS), 197–325 (APFS…SSLS), 355–444 (NSPS…QSQS), 475–565 (GSIT…VNML), 616–660 (QAPV…KTSY), 753–832 (NVGE…GSKS), 854–882 (ALVQ…GAGA), and 904–967 (RPSK…ATGT). Residues 211-233 (PSAASTASPSTSAATRTRPRGGT) are compositionally biased toward low complexity. Composition is skewed to polar residues over residues 234–246 (NASQ…TSFG) and 253–264 (LSSSRSQYSLRP). Basic residues-rich tracts occupy residues 287–303 (AVKK…KKSS) and 404–422 (HLKK…HLAK). Over residues 425 to 434 (KPGEDADSAR) the composition is skewed to basic and acidic residues. Over residues 500-525 (PSPSQTPIAERQTSVTSTVESPSHAS) the composition is skewed to polar residues. Over residues 534–555 (SLRTPSRTTASTSTSSASTVLS) the composition is skewed to low complexity. Positions 630-640 (TDSELSDRKDS) are enriched in basic and acidic residues. The span at 641 to 660 (VVSTHSMRSNHSGISPKTSY) shows a compositional bias: polar residues. Acidic residues predominate over residues 754–763 (VGEEEDDDDD). 2 stretches are compositionally biased toward low complexity: residues 780 to 791 (SSSGISSTHASS) and 854 to 870 (ALVQ…QPSP). Residues 913–935 (RPNTAGSVGATRPSTTTLGSTLS) show a composition bias toward polar residues. Residues 970–1072 (RNHFIRVYKT…LRFVFRPDSV (103 aa)) form the Ras-associating domain. LRR repeat units follow at residues 1086 to 1107 (TFQH…LYKH), 1110 to 1132 (WIVS…VQLC), 1134 to 1155 (SLRT…VRHS), 1157 to 1178 (TLTH…SLDL), 1181 to 1202 (ELMS…FSSI), 1204 to 1225 (TLRN…ICDV), 1227 to 1248 (SLVD…IANL), 1250 to 1271 (NLER…MSEL), 1273 to 1294 (SLRT…LGLP), 1295 to 1316 (RLQN…LGPQ), 1317 to 1336 (LTQV…AALT), 1339 to 1360 (DLTS…LFPQ), 1363 to 1385 (ALVK…GDLK), 1386 to 1407 (RLEM…IGDL), 1409 to 1430 (ALKE…LWLC), 1432 to 1453 (SLAH…PDIR), 1511 to 1534 (SLQK…SELT), 1535 to 1556 (SLEV…SLQT), 1559 to 1580 (KLRE…DLVV), 1583 to 1605 (ELRI…GKLK), 1606 to 1628 (KLAN…HYDW), and 1635 to 1654 (ELRY…TKLS). The PPM-type phosphatase domain occupies 1710–2000 (AYGIADALGK…ESIMVMVISV (291 aa)). The Guanylate cyclase domain maps to 2058–2194 (ALVFTDIKNS…PMVNRAARIS (137 aa)). Residues Asp2063 and Asp2105 each coordinate Mg(2+). Disordered regions lie at residues 2220-2241 (DESS…TEEE), 2354-2378 (EADR…HGTA), and 2467-2493 (PPRA…ELVP). The segment covering 2470–2485 (ASTSALSLPSPRTSPR) has biased composition (polar residues).

Belongs to the adenylyl cyclase class-3 family. Mg(2+) serves as cofactor.

It catalyses the reaction ATP = 3',5'-cyclic AMP + diphosphate. In terms of biological role, plays essential roles in regulation of cellular metabolism by catalyzing the synthesis of a second messenger, cAMP. The chain is Adenylate cyclase (UAC1) from Mycosarcoma maydis (Corn smut fungus).